An 820-amino-acid chain; its full sequence is Protein O-mannosyl-transferase 2 (820 aa).

The chain crosses the membrane as a helical span at residues 124–144 (AAGWWATLAVVTLLSFATRFH). Asparagine 168 is a glycosylation site (N-linked (GlcNAc...) asparagine). The next 5 helical transmembrane spans lie at 170–190 (TFFF…AGYL), 216–236 (GFCA…VLDL), 261–281 (QYIL…LSMV), 301–321 (LTGI…FIIV), and 353–373 (ILCL…VHVM). Asparagine 376 and asparagine 400 each carry an N-linked (GlcNAc...) asparagine glycan. 3 consecutive MIR domains span residues 404 to 460 (PEHL…IKKY), 473 to 529 (VEFV…IEVV), and 534 to 591 (GNRI…IEEH). A glycan (N-linked (GlcNAc...) asparagine) is linked at asparagine 515. N-linked (GlcNAc...) asparagine glycans are attached at residues asparagine 598 and asparagine 653. The next 4 helical transmembrane spans lie at 659-679 (VYLL…VLYL), 713-733 (LLLG…ILYF), 735-755 (HYFP…DTLL), and 774-794 (VGIL…HPLA).

This sequence belongs to the glycosyltransferase 39 family. Post-translationally, N-glycosylated. Ubiquitous. Highly expressed in the acrosome of cap phase spermatids, in spermatocytes and liver. Isoform 1 seems to be testis-specific.

The protein resides in the endoplasmic reticulum membrane. It carries out the reaction a di-trans,poly-cis-dolichyl beta-D-mannosyl phosphate + L-seryl-[protein] = 3-O-(alpha-D-mannosyl)-L-seryl-[protein] + a di-trans,poly-cis-dolichyl phosphate + H(+). It catalyses the reaction a di-trans,poly-cis-dolichyl beta-D-mannosyl phosphate + L-threonyl-[protein] = 3-O-(alpha-D-mannosyl)-L-threonyl-[protein] + a di-trans,poly-cis-dolichyl phosphate + H(+). It functions in the pathway protein modification; protein glycosylation. Functionally, transfers mannosyl residues to the hydroxyl group of serine or threonine residues. Coexpression of both POMT1 and POMT2 is necessary for enzyme activity, expression of either POMT1 or POMT2 alone is insufficient. Essentially dedicated to O-mannosylation of alpha-DAG1 and few other proteins but not of cadherins and protocaherins. The sequence is that of Protein O-mannosyl-transferase 2 (Pomt2) from Mus musculus (Mouse).